Here is a 107-residue protein sequence, read N- to C-terminus: Small ribosomal subunit protein bS16 (107 aa).

The segment at Arg-85 to Lys-107 is disordered.

Belongs to the bacterial ribosomal protein bS16 family.

The chain is Small ribosomal subunit protein bS16 from Rhodopseudomonas palustris (strain BisB5).